Reading from the N-terminus, the 250-residue chain is 3-deoxy-manno-octulosonate cytidylyltransferase (250 aa).

This sequence belongs to the KdsB family.

The protein localises to the cytoplasm. The catalysed reaction is 3-deoxy-alpha-D-manno-oct-2-ulosonate + CTP = CMP-3-deoxy-beta-D-manno-octulosonate + diphosphate. It functions in the pathway nucleotide-sugar biosynthesis; CMP-3-deoxy-D-manno-octulosonate biosynthesis; CMP-3-deoxy-D-manno-octulosonate from 3-deoxy-D-manno-octulosonate and CTP: step 1/1. Its pathway is bacterial outer membrane biogenesis; lipopolysaccharide biosynthesis. Its function is as follows. Activates KDO (a required 8-carbon sugar) for incorporation into bacterial lipopolysaccharide in Gram-negative bacteria. The polypeptide is 3-deoxy-manno-octulosonate cytidylyltransferase (Legionella pneumophila (strain Paris)).